The primary structure comprises 311 residues: tRNA dimethylallyltransferase (311 aa).

19–26 (GPSGSGKS) is a binding site for ATP. Position 21–26 (21–26 (SGSGKS)) interacts with substrate. The interaction with substrate tRNA stretch occupies residues 44-47 (DSLS).

This sequence belongs to the IPP transferase family. Monomer. It depends on Mg(2+) as a cofactor.

The enzyme catalyses adenosine(37) in tRNA + dimethylallyl diphosphate = N(6)-dimethylallyladenosine(37) in tRNA + diphosphate. Functionally, catalyzes the transfer of a dimethylallyl group onto the adenine at position 37 in tRNAs that read codons beginning with uridine, leading to the formation of N6-(dimethylallyl)adenosine (i(6)A). The protein is tRNA dimethylallyltransferase of Helicobacter pylori (strain ATCC 700392 / 26695) (Campylobacter pylori).